A 602-amino-acid chain; its full sequence is Exopolysaccharide phosphotransferase SCO2594 (602 aa).

Positions 251–271 (PRAGEDLDAGDGAAGGPRPGL) are disordered.

The protein belongs to the stealth family.

The polypeptide is Exopolysaccharide phosphotransferase SCO2594 (Streptomyces coelicolor (strain ATCC BAA-471 / A3(2) / M145)).